A 360-amino-acid chain; its full sequence is Phospho-N-acetylmuramoyl-pentapeptide-transferase (360 aa).

10 consecutive transmembrane segments (helical) span residues Arg-25–Ile-45, Thr-73–Leu-93, Tyr-97–Tyr-117, Phe-135–Ala-155, Ile-170–Ala-190, Gly-199–Ser-219, Ala-236–Phe-256, Val-263–Ile-283, Ile-288–Val-308, and Val-338–Lys-358.

It belongs to the glycosyltransferase 4 family. MraY subfamily. Mg(2+) is required as a cofactor.

The protein localises to the cell inner membrane. It catalyses the reaction UDP-N-acetyl-alpha-D-muramoyl-L-alanyl-gamma-D-glutamyl-meso-2,6-diaminopimeloyl-D-alanyl-D-alanine + di-trans,octa-cis-undecaprenyl phosphate = di-trans,octa-cis-undecaprenyl diphospho-N-acetyl-alpha-D-muramoyl-L-alanyl-D-glutamyl-meso-2,6-diaminopimeloyl-D-alanyl-D-alanine + UMP. It participates in cell wall biogenesis; peptidoglycan biosynthesis. Functionally, catalyzes the initial step of the lipid cycle reactions in the biosynthesis of the cell wall peptidoglycan: transfers peptidoglycan precursor phospho-MurNAc-pentapeptide from UDP-MurNAc-pentapeptide onto the lipid carrier undecaprenyl phosphate, yielding undecaprenyl-pyrophosphoryl-MurNAc-pentapeptide, known as lipid I. The polypeptide is Phospho-N-acetylmuramoyl-pentapeptide-transferase (Pseudomonas savastanoi pv. phaseolicola (strain 1448A / Race 6) (Pseudomonas syringae pv. phaseolicola (strain 1448A / Race 6))).